Reading from the N-terminus, the 119-residue chain is Large ribosomal subunit protein bL20 (119 aa).

The protein belongs to the bacterial ribosomal protein bL20 family.

Functionally, binds directly to 23S ribosomal RNA and is necessary for the in vitro assembly process of the 50S ribosomal subunit. It is not involved in the protein synthesizing functions of that subunit. The chain is Large ribosomal subunit protein bL20 from Latilactobacillus sakei subsp. sakei (strain 23K) (Lactobacillus sakei subsp. sakei).